The following is a 427-amino-acid chain: Beta-porphyranase D (427 aa).

Positions 1–19 (MILKQAILTLVLVNANLFA) are cleaved as a signal peptide. Residues 23-45 (PKTYSSTDKETRQGPPKPPMGKR) form a disordered region. In terms of domain architecture, GH16 spans 32–308 (ETRQGPPKPP…WVRAYRLVDV (277 aa)). Substrate is bound by residues tryptophan 73, arginine 76, glutamate 168, glutamate 173, and glutamate 272. The Nucleophile role is filled by glutamate 168. Glutamate 173 serves as the catalytic Proton donor.

The protein belongs to the glycosyl hydrolase 16 family.

Its subcellular location is the periplasm. It carries out the reaction Hydrolysis of beta-D-galactopyranose-(1-&gt;4)-alpha-L-galactopyranose-6-sulfate linkages in porphyran.. Cleaves the sulfated polysaccharide porphyran at the (1-&gt;4) linkages between beta-D-galactopyranose and alpha-L-galactopyranose-6-sulfate, forming mostly the disaccharide alpha-L-galactopyranose-6-sulfate-(1-&gt;3)-beta-D-galactose. This is Beta-porphyranase D (porD) from Zobellia galactanivorans (strain DSM 12802 / CCUG 47099 / CIP 106680 / NCIMB 13871 / Dsij).